Consider the following 401-residue polypeptide: uncharacterized protein (401 aa).

Residues cysteine 7, cysteine 13, cysteine 16, and cysteine 94 each coordinate [4Fe-4S] cluster. Glutamine 230, tyrosine 259, glutamate 280, and aspartate 328 together coordinate S-adenosyl-L-methionine. The active-site Nucleophile is the cysteine 355.

Belongs to the class I-like SAM-binding methyltransferase superfamily. RNA M5U methyltransferase family.

This is an uncharacterized protein from Chlamydia caviae (strain ATCC VR-813 / DSM 19441 / 03DC25 / GPIC) (Chlamydophila caviae).